Here is a 286-residue protein sequence, read N- to C-terminus: Light-independent protochlorophyllide reductase iron-sulfur ATP-binding protein (286 aa).

ATP is bound by residues G10–T15 and K39. Position 14 (S14) interacts with Mg(2+). Residues C95 and C129 each coordinate [4Fe-4S] cluster. Residue N180–R181 participates in ATP binding.

It belongs to the NifH/BchL/ChlL family. In terms of assembly, homodimer. Protochlorophyllide reductase is composed of three subunits; ChlL, ChlN and ChlB. Requires [4Fe-4S] cluster as cofactor.

The catalysed reaction is chlorophyllide a + oxidized 2[4Fe-4S]-[ferredoxin] + 2 ADP + 2 phosphate = protochlorophyllide a + reduced 2[4Fe-4S]-[ferredoxin] + 2 ATP + 2 H2O. It participates in porphyrin-containing compound metabolism; chlorophyll biosynthesis (light-independent). Its function is as follows. Component of the dark-operative protochlorophyllide reductase (DPOR) that uses Mg-ATP and reduced ferredoxin to reduce ring D of protochlorophyllide (Pchlide) to form chlorophyllide a (Chlide). This reaction is light-independent. The L component serves as a unique electron donor to the NB-component of the complex, and binds Mg-ATP. The chain is Light-independent protochlorophyllide reductase iron-sulfur ATP-binding protein from Leptolyngbya boryana (Plectonema boryanum).